Reading from the N-terminus, the 534-residue chain is Serine/threonine-protein kinase 35 (534 aa).

Positions 32-176 (VESHGSLGAQ…AAAARAMDPV (145 aa)) are disordered. Low complexity-rich tracts occupy residues 39-65 (GAQA…TSRA) and 166-176 (PAAAARAMDPV). In terms of domain architecture, Protein kinase spans 202 to 530 (YSLLAEIGRG…FELETRMDQV (329 aa)). ATP-binding positions include 208–216 (IGRGSYGVV) and lysine 231. The active-site Proton acceptor is the aspartate 360.

Belongs to the protein kinase superfamily. Ser/Thr protein kinase family. In terms of assembly, interacts with PDLIM1/CLP-36. Post-translationally, autophosphorylated. In terms of tissue distribution, expressed in testis.

Its subcellular location is the nucleus. It is found in the nucleolus. It localises to the cytoplasm. It catalyses the reaction L-seryl-[protein] + ATP = O-phospho-L-seryl-[protein] + ADP + H(+). It carries out the reaction L-threonyl-[protein] + ATP = O-phospho-L-threonyl-[protein] + ADP + H(+). This chain is Serine/threonine-protein kinase 35 (STK35), found in Homo sapiens (Human).